The primary structure comprises 442 residues: Mitochondrial distribution and morphology protein 12 (442 aa).

The region spanning 1 to 442 (MSIDINWEAA…VYPSFWTFLV (442 aa)) is the SMP-LTD domain. Disordered regions lie at residues 67–125 (NDFY…RVGY), 202–277 (LSLA…RRMR), and 364–387 (EGYH…RRSN). Positions 69–80 (FYEEDEDGEDLS) are enriched in acidic residues. Residues 90 to 100 (PSSQGLSQSTP) show a composition bias toward polar residues. Low complexity predominate over residues 101-112 (NGDAGSSNSSSN). A compositionally biased stretch (basic and acidic residues) spans 213-222 (RQRERARSSD). The span at 227 to 245 (SPQSRSRPSTSSTRQRTST) shows a compositional bias: low complexity.

The protein belongs to the MDM12 family. As to quaternary structure, component of the ER-mitochondria encounter structure (ERMES) or MDM complex, composed of MMM1, MDM10, MDM12 and MDM34. An MMM1 homodimer associates with one molecule of MDM12 on each side in a pairwise head-to-tail manner, and the SMP-LTD domains of MMM1 and MDM12 generate a continuous hydrophobic tunnel for phospholipid trafficking.

It is found in the mitochondrion outer membrane. Its subcellular location is the endoplasmic reticulum membrane. Component of the ERMES/MDM complex, which serves as a molecular tether to connect the endoplasmic reticulum (ER) and mitochondria. Components of this complex are involved in the control of mitochondrial shape and protein biogenesis, and function in nonvesicular lipid trafficking between the ER and mitochondria. MDM12 is required for the interaction of the ER-resident membrane protein MMM1 and the outer mitochondrial membrane-resident beta-barrel protein MDM10. The MDM12-MMM1 subcomplex functions in the major beta-barrel assembly pathway that is responsible for biogenesis of all mitochondrial outer membrane beta-barrel proteins, and acts in a late step after the SAM complex. The MDM10-MDM12-MMM1 subcomplex further acts in the TOM40-specific pathway after the action of the MDM12-MMM1 complex. Essential for establishing and maintaining the structure of mitochondria and maintenance of mtDNA nucleoids. This chain is Mitochondrial distribution and morphology protein 12, found in Arthroderma otae (strain ATCC MYA-4605 / CBS 113480) (Microsporum canis).